We begin with the raw amino-acid sequence, 327 residues long: Leucotoxin LukDv (327 aa).

A signal peptide spans Met-1–Ala-26.

The protein belongs to the aerolysin family. In terms of assembly, toxicity requires sequential binding and synergistic association of a class S and a class F component which form heterooligomeric complexes. LukEv (class S) associates with LukDv (class F).

The protein localises to the secreted. In terms of biological role, part of a bi-component leucotoxin that acts by forming pores in the membrane of the target cells. The activity of LukEv-LukDv to rabbit leukocytes is similar to that of the Panton-Valentine leucocidin (PVL). LukEv-LukDv is hemolytic to rabbit red blood cells although the activity is only 8% of gamma-hemolysin. The chain is Leucotoxin LukDv (lukDv) from Staphylococcus aureus (strain NCTC 8325 / PS 47).